The following is a 329-amino-acid chain: Quinone-oxidoreductase homolog, chloroplastic (329 aa).

The protein belongs to the zinc-containing alcohol dehydrogenase family. Quinone oxidoreductase subfamily. Post-translationally, the transit peptide is not cleaved.

It is found in the plastid. Its subcellular location is the chloroplast inner membrane. The polypeptide is Quinone-oxidoreductase homolog, chloroplastic (QOR) (Spinacia oleracea (Spinach)).